Consider the following 995-residue polypeptide: Probable copper-transporting ATPase HMA5 (995 aa).

At 1–299 (MATKLLSLTC…QGEIKQYYKS (299 aa)) the chain is on the cytoplasmic side. 2 consecutive HMA domains span residues 51 to 117 (SRAV…FEAS) and 129 to 195 (QVCR…FEAV). Residues C62, C65, C140, and C143 each coordinate Cu(+). Residues 204–270 (SKIDLKIDGE…VIESTVFGHS (67 aa)) enclose the HMA 3; degenerate domain. A helical transmembrane segment spans residues 300–321 (FLWSLVFTVPVFLTAMVFMYIP). Residues 322–340 (GIKDLLMFKVINMLTVGEI) are Extracellular-facing. Residues 341–360 (IRCVLATPVQFVIGWRFYTG) traverse the membrane as a helical segment. The Cytoplasmic portion of the chain corresponds to 361-367 (SYKALRR). Residues 368 to 388 (GSANMDVLIALGTNAAYFYSL) form a helical membrane-spanning segment. The Extracellular segment spans residues 389–406 (YTVLRAATSPDFKGVDFF). A helical transmembrane segment spans residues 407 to 427 (ETSAMLISFIILGKYLEVMAK). Topologically, residues 428 to 561 (GKTSQAIAKL…KAPVQKLADR (134 aa)) are cytoplasmic. The helical transmembrane segment at 562–584 (ISKFFVPLVIFLSFSTWLAWFLA) threads the bilayer. Residues 585 to 605 (GKLHWYPESWIPSSMDSFELA) lie on the Extracellular side of the membrane. Residues 606–623 (LQFGISVMVIACPCALGL) form a helical membrane-spanning segment. The Cytoplasmic segment spans residues 624–920 (ATPTAVMVGT…DLSRKTFSRI (297 aa)). D661 functions as the 4-aspartylphosphate intermediate in the catalytic mechanism. Residues D866 and D870 each contribute to the Mg(2+) site. Residues 921–940 (RLNYVWALGYNLMGIPIAAG) form a helical membrane-spanning segment. Residues 941-952 (VLFPGTRFRLPP) are Extracellular-facing. A helical transmembrane segment spans residues 953–971 (WIAGAAMAASSVSVVCCSL). At 972-995 (LLKNYKRPKKLDHLEIREIQVERV) the chain is on the cytoplasmic side.

This sequence belongs to the cation transport ATPase (P-type) (TC 3.A.3) family. Type IB subfamily. In terms of assembly, interacts with ATX1. Expressed in roots and flowers.

It is found in the membrane. It catalyses the reaction Cu(+)(in) + ATP + H2O = Cu(+)(out) + ADP + phosphate + H(+). In terms of biological role, involved in copper import into the cell. May play a role in copper detoxification in roots. The chain is Probable copper-transporting ATPase HMA5 (HMA5) from Arabidopsis thaliana (Mouse-ear cress).